A 538-amino-acid polypeptide reads, in one-letter code: DALR anticodon-binding domain-containing protein 3 (538 aa).

Part of a complex containing tRNA(Arg) and METTL2. Interacts with tRNA(Arg)(CCU) and tRNA(Arg)(UCU). Interacts with METTL2.

Involved in tRNA methylation. Facilitates the recognition and targeting of tRNA(Arg)(CCU) and tRNA(Arg)(UCU) substrates for N(3)-methylcytidine modification by METTL2. This is DALR anticodon-binding domain-containing protein 3 (Dalrd3) from Rattus norvegicus (Rat).